Reading from the N-terminus, the 258-residue chain is Imidazole glycerol phosphate synthase subunit HisF (258 aa).

Residues aspartate 12 and aspartate 131 contribute to the active site.

It belongs to the HisA/HisF family. Heterodimer of HisH and HisF.

Its subcellular location is the cytoplasm. The enzyme catalyses 5-[(5-phospho-1-deoxy-D-ribulos-1-ylimino)methylamino]-1-(5-phospho-beta-D-ribosyl)imidazole-4-carboxamide + L-glutamine = D-erythro-1-(imidazol-4-yl)glycerol 3-phosphate + 5-amino-1-(5-phospho-beta-D-ribosyl)imidazole-4-carboxamide + L-glutamate + H(+). It participates in amino-acid biosynthesis; L-histidine biosynthesis; L-histidine from 5-phospho-alpha-D-ribose 1-diphosphate: step 5/9. Functionally, IGPS catalyzes the conversion of PRFAR and glutamine to IGP, AICAR and glutamate. The HisF subunit catalyzes the cyclization activity that produces IGP and AICAR from PRFAR using the ammonia provided by the HisH subunit. The polypeptide is Imidazole glycerol phosphate synthase subunit HisF (Corynebacterium diphtheriae (strain ATCC 700971 / NCTC 13129 / Biotype gravis)).